Reading from the N-terminus, the 376-residue chain is Probable deoxyhypusine synthase (376 aa).

NAD(+) is bound by residues S105 to S109, T131 to G133, E137, and D238. E136–E137 contacts spermidine. D243 is a spermidine binding site. G283 contacts NAD(+). Residue H288 coordinates spermidine. T308 to G309 is a binding site for NAD(+). Spermidine-binding positions include G314–D316 and E323–K329. K329 acts as the Nucleophile in catalysis. E342–A343 is a binding site for NAD(+).

The protein belongs to the deoxyhypusine synthase family. It depends on NAD(+) as a cofactor.

It catalyses the reaction [eIF5A protein]-L-lysine + spermidine = [eIF5A protein]-deoxyhypusine + propane-1,3-diamine. It functions in the pathway protein modification; eIF5A hypusination. Functionally, catalyzes the NAD-dependent oxidative cleavage of spermidine and the subsequent transfer of the butylamine moiety of spermidine to the epsilon-amino group of a critical lysine residue of the eIF-5A precursor protein to form the intermediate deoxyhypusine residue. This is the first step of the post-translational modification of that lysine into an unusual amino acid residue named hypusine. Hypusination is unique to mature eIF-5A factor and is essential for its function. The protein is Probable deoxyhypusine synthase (dhps) of Dictyostelium discoideum (Social amoeba).